The following is a 247-amino-acid chain: Adenosylcobinamide-GDP ribazoletransferase (247 aa).

Helical transmembrane passes span 34 to 54, 59 to 79, 113 to 133, and 194 to 214; these read IITFPLIGLLLGAISGLVFMV, CGVPLAALFSVLVLALMTGGF, GGLALIFVVLAKILVLSELAL, and VLLPGMHGVAAMVVTMVAIFI.

This sequence belongs to the CobS family. Mg(2+) serves as cofactor.

The protein resides in the cell inner membrane. The catalysed reaction is alpha-ribazole + adenosylcob(III)inamide-GDP = adenosylcob(III)alamin + GMP + H(+). The enzyme catalyses alpha-ribazole 5'-phosphate + adenosylcob(III)inamide-GDP = adenosylcob(III)alamin 5'-phosphate + GMP + H(+). The protein operates within cofactor biosynthesis; adenosylcobalamin biosynthesis; adenosylcobalamin from cob(II)yrinate a,c-diamide: step 7/7. In terms of biological role, joins adenosylcobinamide-GDP and alpha-ribazole to generate adenosylcobalamin (Ado-cobalamin). Also synthesizes adenosylcobalamin 5'-phosphate from adenosylcobinamide-GDP and alpha-ribazole 5'-phosphate. This chain is Adenosylcobinamide-GDP ribazoletransferase, found in Escherichia coli (strain ATCC 8739 / DSM 1576 / NBRC 3972 / NCIMB 8545 / WDCM 00012 / Crooks).